A 129-amino-acid chain; its full sequence is Antileukoproteinase (129 aa).

The N-terminal stretch at 1 to 22 (GRGLLPFVLLALGIXAPWAVEG) is a signal peptide. 2 consecutive WAP domains span residues 25–73 (NALK…LNPV) and 79–127 (VKVK…LTPV). Intrachain disulfides connect Cys-32/Cys-61, Cys-40/Cys-65, Cys-48/Cys-60, Cys-54/Cys-69, Cys-86/Cys-115, Cys-93/Cys-119, Cys-102/Cys-114, and Cys-108/Cys-123. The tract at residues 81–129 (VKPGKCPVVYGQCMMLNPPNHCKTDSQCLGDLKCCKSMCGKVCLTPVKA) is elastase inhibitory domain.

Interacts with GRN; interaction protects progranulin from proteolysis. In terms of tissue distribution, found in pregnant endometrium and myometrium, placenta, allantoic fluids, fetal cord blood, and fetal liver. Also found in uterus and lung.

Its subcellular location is the secreted. In terms of biological role, acid-stable proteinase inhibitor with strong affinities for trypsin, chymotrypsin, elastase, and cathepsin G. Modulates the inflammatory and immune responses after bacterial infection, and after infection by the intracellular parasite L.major. Down-regulates responses to bacterial lipopolysaccharide (LPS). Plays a role in regulating the activation of NF-kappa-B and inflammatory responses. Has antimicrobial activity against mycobacteria, but not against salmonella. Contributes to normal resistance against infection by M.tuberculosis. Required for normal resistance to infection by L.major. Required for normal wound healing, probably by preventing tissue damage by limiting protease activity. Together with ELANE, required for normal differentiation and proliferation of bone marrow myeloid cells. The polypeptide is Antileukoproteinase (SLPI) (Sus scrofa (Pig)).